We begin with the raw amino-acid sequence, 72 residues long: Lantibiotic lichenicidin VK21 A2 (72 aa).

Residues 1-21 (MKTMKNSAAREAFKGANHPAG) are disordered. The propeptide occupies 1 to 40 (MKTMKNSAAREAFKGANHPAGMVSEEELKALVGGNDVNPE). A 2-oxobutanoic acid modification is found at Thr-41. A (Z)-2,3-didehydrobutyrine mark is found at Thr-42, Thr-45, and Thr-46. Residues 47–51 (SSWTC) constitute a cross-link (lanthionine (Ser-Cys)). Ser-48 carries the post-translational modification 2,3-didehydroalanine (Ser). Residues Thr-53 and Thr-57 each carry the (Z)-2,3-didehydrobutyrine modification. The lanthionine (Ser-Cys) cross-link spans 59–63 (SASLC). 2 cross-links (beta-methyllanthionine (Thr-Cys)) span residues 65–68 (TTKC) and 69–72 (TSRC). A (Z)-2,3-didehydrobutyrine modification is found at Thr-66.

Maturation of lantibiotics involves the enzymatic conversion of Thr, and Ser into dehydrated AA and the formation of thioether bonds with cysteine. This is followed by membrane translocation and cleavage of the modified precursor. In terms of processing, the 2,3-didehydrobutyrines are determined to be the Z-isomers.

It is found in the secreted. Lanthionine-containing peptide antibiotic (lantibiotic) active on Gram-positive bacteria. The bactericidal activity of lantibiotics is based on depolarization of energized bacterial cytoplasmic membranes, initiated by the formation of aqueous transmembrane pores. When present individually, LchA2 exhibits activity towards B.subtilis L1 (IC(50)=30 uM), Rhodococcus sp. SS2 (IC(50)=16.6 uM), M.luteus B1314 (IC(50)=2.6 uM), B.megaterium VKM41 (IC(50)=2 uM), S.aureus 209p (IC(50)=20 uM), B.pumilus 2001, B.globigii I, B.amyloliquefaciens I, M.smegmatis 1171 and M.phlei 1291. However, when combined with LchA1, it displays much stronger activity against B.subtilis L1 (IC(50)=0.64 uM), Rhodococcus sp. SS2 (IC(50)=0.64 uM), M.luteus B1314 (IC(50)=0.09 uM), B.megaterium VKM41 (IC(50)=0.12 uM) and S.aureus 209p (IC(50)=0.64 uM). The activity of the combined LchA1 and LchA2 peptides is strongest at a molar ratio of 1. Even when applied at 17-fold concentration of the highest IC(50) values for Gram-positive bacteria, neither the individual nor the combined peptides display activity against Gram-negative bacteria P.aeruginosa PAO1, P.putida I-97 or E.coli C600. The sequence is that of Lantibiotic lichenicidin VK21 A2 from Bacillus licheniformis.